A 274-amino-acid polypeptide reads, in one-letter code: Energy-coupling factor transporter ATP-binding protein EcfA (274 aa).

Positions 2–235 (IRLENVSYNY…LSLRYLGLTP (234 aa)) constitute an ABC transporter domain. Residue 35–42 (GKNGSGKS) coordinates ATP.

Belongs to the ABC transporter superfamily. Energy-coupling factor EcfA family. As to quaternary structure, forms a stable energy-coupling factor (ECF) transporter complex composed of 2 membrane-embedded substrate-binding proteins (S component), 2 ATP-binding proteins (A component) and 2 transmembrane proteins (T component).

The protein resides in the cell membrane. In terms of biological role, ATP-binding (A) component of a common energy-coupling factor (ECF) ABC-transporter complex. Unlike classic ABC transporters this ECF transporter provides the energy necessary to transport a number of different substrates. This is Energy-coupling factor transporter ATP-binding protein EcfA from Methanosarcina acetivorans (strain ATCC 35395 / DSM 2834 / JCM 12185 / C2A).